A 636-amino-acid chain; its full sequence is Amylosucrase (636 aa).

Substrate contacts are provided by D152, H195, Q262, and R292. D294 (nucleophile) is an active-site residue. E336 serves as the catalytic Proton donor. H400, D401, and R517 together coordinate substrate.

This sequence belongs to the glycosyl hydrolase 13 family. Monomer.

Its subcellular location is the secreted. The enzyme catalyses [(1-&gt;4)-alpha-D-glucosyl](n) + sucrose = [(1-&gt;4)-alpha-D-glucosyl](n+1) + D-fructose. Amylosucrase favors hydrolysis at low sucrose concentrations, and polymerization at high sucrose concentrations. Competitively inhibited by fructose. Catalyzes the synthesis of alpha-glucan from sucrose. Catalyzes, in addition, sucrose hydrolysis, maltose and maltotriose synthesis by successive transfers of the glucosyl moiety of sucrose onto the released glucose, and finally turanose and trehalulose synthesis, these two sucrose isomers being obtained by glucosyl transfer onto fructose. The sequence is that of Amylosucrase (ams) from Neisseria polysaccharea.